Consider the following 109-residue polypeptide: Heterogeneous nuclear ribonucleoprotein-like protein HD40 (109 aa).

The segment at 1–36 is disordered; that stretch reads EEVSNGQEHTEGMXQGEXNXIXVEEHHEGEKNSHLV. Positions 23 to 36 are enriched in basic and acidic residues; sequence VEEHHEGEKNSHLV. Residues 40 to 50 enclose the RRM domain; sequence EEKKLFVGALS. An asymmetric dimethylarginine mark is found at Arg-102 and Arg-105.

It localises to the cytoplasm. The protein localises to the nucleus. The sequence is that of Heterogeneous nuclear ribonucleoprotein-like protein HD40 from Artemia salina (Brine shrimp).